The chain runs to 314 residues: Cell division protein FtsQ (314 aa).

Composition is skewed to basic and acidic residues over residues 1–15 and 30–57; these read MTEH…RVAD and ESKD…ERRA. Residues 1-57 are disordered; sequence MTEHNEDPQIERVADDAADEEAVTEPLATESKDEPAEHPEFEGPRRRARRERAERRA. Residues 1–99 lie on the Cytoplasmic side of the membrane; the sequence is MTEHNEDPQI…AARGVVRGLK (99 aa). Residues 100–120 form a helical membrane-spanning segment; it reads ALLATVVLAVVGIGLGLALYF. At 121–314 the chain is on the extracellular side; sequence TPAMSAREIV…VSSPDLPTVK (194 aa). Residues 124 to 192 enclose the POTRA domain; that stretch reads MSAREIVIIG…SALRITIVER (69 aa).

Belongs to the FtsQ/DivIB family. FtsQ subfamily.

It is found in the cell membrane. Essential cell division protein. The sequence is that of Cell division protein FtsQ from Mycobacterium bovis (strain ATCC BAA-935 / AF2122/97).